The chain runs to 277 residues: Putative protease slr0021 (277 aa).

Residue Ser85 is the Nucleophile of the active site. Lys137 serves as the catalytic Proton donor/acceptor.

It belongs to the peptidase S49 family.

The polypeptide is Putative protease slr0021 (Synechocystis sp. (strain ATCC 27184 / PCC 6803 / Kazusa)).